Reading from the N-terminus, the 453-residue chain is Bifunctional protein GlmU (453 aa).

The interval 1–225 (MNIVILAAGT…EWETLGVNSK (225 aa)) is pyrophosphorylase. UDP-N-acetyl-alpha-D-glucosamine contacts are provided by residues 6-9 (LAAG), lysine 20, glutamine 71, 76-77 (GT), 98-100 (YGD), glycine 135, glutamate 150, asparagine 165, and asparagine 223. Aspartate 100 provides a ligand contact to Mg(2+). A Mg(2+)-binding site is contributed by asparagine 223. The interval 226–246 (AQLAELERIHQRKLAEALLAD) is linker. The N-acetyltransferase stretch occupies residues 247-453 (GVTLADPARI…GYVRPVKKKS (207 aa)). Residues arginine 329 and lysine 347 each contribute to the UDP-N-acetyl-alpha-D-glucosamine site. Histidine 359 acts as the Proton acceptor in catalysis. 2 residues coordinate UDP-N-acetyl-alpha-D-glucosamine: tyrosine 362 and asparagine 373. Acetyl-CoA is bound by residues alanine 376, 382-383 (NY), serine 401, and alanine 419.

In the N-terminal section; belongs to the N-acetylglucosamine-1-phosphate uridyltransferase family. This sequence in the C-terminal section; belongs to the transferase hexapeptide repeat family. In terms of assembly, homotrimer. Mg(2+) serves as cofactor.

It localises to the cytoplasm. The enzyme catalyses alpha-D-glucosamine 1-phosphate + acetyl-CoA = N-acetyl-alpha-D-glucosamine 1-phosphate + CoA + H(+). It carries out the reaction N-acetyl-alpha-D-glucosamine 1-phosphate + UTP + H(+) = UDP-N-acetyl-alpha-D-glucosamine + diphosphate. It functions in the pathway nucleotide-sugar biosynthesis; UDP-N-acetyl-alpha-D-glucosamine biosynthesis; N-acetyl-alpha-D-glucosamine 1-phosphate from alpha-D-glucosamine 6-phosphate (route II): step 2/2. Its pathway is nucleotide-sugar biosynthesis; UDP-N-acetyl-alpha-D-glucosamine biosynthesis; UDP-N-acetyl-alpha-D-glucosamine from N-acetyl-alpha-D-glucosamine 1-phosphate: step 1/1. It participates in bacterial outer membrane biogenesis; LPS lipid A biosynthesis. Its function is as follows. Catalyzes the last two sequential reactions in the de novo biosynthetic pathway for UDP-N-acetylglucosamine (UDP-GlcNAc). The C-terminal domain catalyzes the transfer of acetyl group from acetyl coenzyme A to glucosamine-1-phosphate (GlcN-1-P) to produce N-acetylglucosamine-1-phosphate (GlcNAc-1-P), which is converted into UDP-GlcNAc by the transfer of uridine 5-monophosphate (from uridine 5-triphosphate), a reaction catalyzed by the N-terminal domain. The chain is Bifunctional protein GlmU from Burkholderia thailandensis (strain ATCC 700388 / DSM 13276 / CCUG 48851 / CIP 106301 / E264).